The following is a 294-amino-acid chain: MFGLGHNSKEISMSHIGTKFILAEKFTFDPLSNTLIDKEDSEEIIRLGSNESRILWLLAQRPNEVISRNDLHDFVWREQGFEVDDSSLTQAISTLRKMLKDSTKSPQYVKTVPKRGYQLIARVETVEEEMARESEAAHDISQPESVNEYAESSSVPSSATVVNTPQPANVVTNKSAPNLGNRLLILIAVLLPLAVLLLTNPSQTSFKPLTVVDGVAVNMPNNHPDLSNWLPSIELCVKKYNEKHTGGLKPIEVIATGGQNNQLTLNYIHSPEVSGENITLRIVANPNDAIKVCE.

Over 1–182 (MFGLGHNSKE…NKSAPNLGNR (182 aa)) the chain is Cytoplasmic. Positions 18 to 121 (TKFILAEKFT…VPKRGYQLIA (104 aa)) form a DNA-binding region, ompR/PhoB-type. The chain crosses the membrane as a helical span at residues 183 to 198 (LLILIAVLLPLAVLLL). Over 199 to 294 (TNPSQTSFKP…NPNDAIKVCE (96 aa)) the chain is Periplasmic.

The protein resides in the cell membrane. In terms of biological role, this transcription activator controls cholera toxin, pilus colonization factor and outer membrane protein expression in V.cholerae. It binds to the 5'-TTTTGAT-3' tandemly repeated DNA sequence in the cholera toxin promoter region. ToxS interacts with the C-terminal periplasmic domain of ToxR, stimulating its activity. It activates transcription at the promoters for tcpI and tcpA and this is presumably via ToxT. The polypeptide is Cholera toxin transcriptional activator (toxR) (Vibrio cholerae serotype O1 (strain ATCC 39315 / El Tor Inaba N16961)).